Consider the following 215-residue polypeptide: High mobility group protein B1 (215 aa).

Position 1–10 (1–10) interacts with heparin; that stretch reads MGKGDPKKPR. A sufficient for interaction with HAVCR2 region spans residues 1-97; the sequence is MGKGDPKKPR…KFKDPNAPKR (97 aa). 4 positions are modified to N6-acetyllysine: lysine 3, lysine 7, lysine 8, and lysine 12. The segment at 3–15 is LPS binding (delipidated); the sequence is KGDPKKPRGKMSS. Residues 9–79 constitute a DNA-binding region (HMG box 1); sequence PRGKMSSYAF…RYEREMKTYI (71 aa). Cysteine 23 is modified (cysteine sulfonic acid (-SO3H); alternate). A disulfide bridge links cysteine 23 with cysteine 45. The segment at 27–43 is NLS 1; it reads HKKKHPDASVNFSEFSK. A Nuclear localization signal (NLS) 1 motif is present at residues 27–43; the sequence is HKKKHPDASVNFSEFSK. Residues lysine 28, lysine 29, and lysine 30 each carry the N6-acetyllysine modification. Lysine 28 participates in a covalent cross-link: Isoglutamyl lysine isopeptide (Lys-Gln) (interchain with Q-?). A Phosphoserine modification is found at serine 35. Lysine 43 carries the N6-acetyllysine modification. Residues lysine 43 and lysine 44 each participate in an isoglutamyl lysine isopeptide (Lys-Gln) (interchain with Q-?) cross-link. Cysteine 45 bears the Cysteine sulfonic acid (-SO3H); alternate mark. Lysine 68 is covalently cross-linked (Isoglutamyl lysine isopeptide (Lys-Gln) (interchain with Q-?)). Residues 76–95 form a disordered region; it reads KTYIPPKGETKKKFKDPNAP. Residues 80-96 form an LPS binding (Lipid A) region; it reads PPKGETKKKFKDPNAPK. A compositionally biased stretch (basic and acidic residues) spans 83–94; it reads GETKKKFKDPNA. A cytokine-stimulating activity region spans residues 89 to 108; the sequence is FKDPNAPKRPPSAFFLFCSE. At lysine 90 the chain carries N6-acetyllysine. The segment at residues 95–163 is a DNA-binding region (HMG box 2); it reads PKRPPSAFFL…KYEKDIAAYR (69 aa). The residue at position 100 (serine 100) is a Phosphoserine. Residue cysteine 106 is modified to Cysteine sulfonic acid (-SO3H). An N6-acetyllysine mark is found at lysine 127, lysine 128, lysine 141, lysine 172, lysine 173, lysine 177, and lysine 180. The binding to AGER/RAGE stretch occupies residues 150–183; that stretch reads KLKEKYEKDIAAYRAKGKPDAAKKGVVKAEKSKK. Positions 161-179 are enriched in basic and acidic residues; it reads AYRAKGKPDAAKKGVVKAE. Residues 161 to 215 are disordered; that stretch reads AYRAKGKPDAAKKGVVKAEKSKKKKEEEEDEEDEEDEEEEEDEEDEDEEEDDDDE. Positions 178 to 184 are NLS 2; that stretch reads AEKSKKK. The Nuclear localization signal (NLS) 2 motif lies at 178 to 184; the sequence is AEKSKKK. Lysine 180 is covalently cross-linked (Isoglutamyl lysine isopeptide (Lys-Gln) (interchain with Q-?)). Serine 181 is modified (ADP-ribosylserine). N6-acetyllysine occurs at positions 182, 183, 184, and 185. Residues lysine 182, lysine 183, and lysine 184 each participate in an isoglutamyl lysine isopeptide (Lys-Gln) (interchain with Q-?) cross-link. Residues 187-215 show a composition bias toward acidic residues; sequence EEEDEEDEEDEEEEEDEEDEDEEEDDDDE.

It belongs to the HMGB family. Interacts (fully reduced HMGB1) with CXCL12; probably in a 1:2 ratio involving two molecules of CXCL12, each interacting with one HMG box of HMGB1; inhibited by glycyrrhizin. Associates with the TLR4:LY96 receptor complex. Component of the RAG complex composed of core components RAG1 and RAG2, and associated component HMGB1 or HMGB2. Interacts (in cytoplasm upon starvation) with BECN1; inhibits the interaction of BECN1 and BCL2 leading to promotion of autophagy. Interacts with KPNA1; involved in nuclear import. Interacts with SREBF1, TLR2, TLR4, TLR9, PTPRZ1, APEX1, FEN1, POLB, TERT. Interacts with IL1B, AGER, MSH2, XPA, XPC, HNF1A, TP53. Interacts with CD24; the probable CD24:SIGLEC10 complex is proposed to inhibit HGMB1-mediated tissue damage immune response. Interacts with THBD; prevents HGMB1 interaction with ACER/RAGE and inhibits HGMB1 pro-inflammatory activity. Interacts with HAVCR2; impairs HMGB1 binding to B-DNA and likely HMGB1-mediated innate immune response. Interacts with XPO1; mediating nuclear export. Interacts with receptor RAGE/AGER. Phosphorylated at serine residues. Phosphorylation in both NLS regions is required for cytoplasmic translocation followed by secretion. Post-translationally, acetylated on multiple sites upon stimulation with LPS. Acetylation on lysine residues in the nuclear localization signals (NLS 1 and NLS 2) leads to cytoplasmic localization and subsequent secretion. Acetylation on Lys-3 results in preferential binding to DNA ends and impairs DNA bending activity. In terms of processing, reduction/oxidation of cysteine residues Cys-23, Cys-45 and Cys-106 and a possible intramolecular disulfide bond involving Cys-23 and Cys-45 give rise to different redox forms with specific functional activities in various cellular compartments: 1- fully reduced HMGB1 (HMGB1C23hC45hC106h), 2- disulfide HMGB1 (HMGB1C23-C45C106h) and 3- sulfonyl HMGB1 (HMGB1C23soC45soC106so). Poly-ADP-ribosylated by PARP1 when secreted following stimulation with LPS. Post-translationally, in vitro cleavage by CASP1 is liberating a HMG box 1-containing peptide which may mediate immunogenic activity; the peptide antagonizes apoptosis-induced immune tolerance. Can be proteolytically cleaved by a thrombin:thrombomodulin complex; reduces binding to heparin and pro-inflammatory activities. In terms of processing, forms covalent cross-links mediated by transglutaminase TGM2, between a glutamine and the epsilon-amino group of a lysine residue, forming homopolymers and heteropolymers.

It is found in the nucleus. It localises to the chromosome. The protein localises to the cytoplasm. Its subcellular location is the secreted. The protein resides in the cell membrane. It is found in the endosome. It localises to the endoplasmic reticulum-Golgi intermediate compartment. In terms of biological role, multifunctional redox sensitive protein with various roles in different cellular compartments. In the nucleus is one of the major chromatin-associated non-histone proteins and acts as a DNA chaperone involved in replication, transcription, chromatin remodeling, V(D)J recombination, DNA repair and genome stability. Proposed to be an universal biosensor for nucleic acids. Promotes host inflammatory response to sterile and infectious signals and is involved in the coordination and integration of innate and adaptive immune responses. In the cytoplasm functions as a sensor and/or chaperone for immunogenic nucleic acids implicating the activation of TLR9-mediated immune responses, and mediates autophagy. Acts as a danger-associated molecular pattern (DAMP) molecule that amplifies immune responses during tissue injury. Released to the extracellular environment can bind DNA, nucleosomes, IL-1 beta, CXCL12, AGER isoform 2/sRAGE, lipopolysaccharide (LPS) and lipoteichoic acid (LTA), and activates cells through engagement of multiple surface receptors. In the extracellular compartment fully reduced HMGB1 (released by necrosis) acts as a chemokine, disulfide HMGB1 (actively secreted) as a cytokine, and sulfonyl HMGB1 (released from apoptotic cells) promotes immunological tolerance. Has proangiogenic activity. May be involved in platelet activation. Binds to phosphatidylserine and phosphatidylethanolamide. Bound to RAGE mediates signaling for neuronal outgrowth. May play a role in accumulation of expanded polyglutamine (polyQ) proteins. Nuclear functions are attributed to fully reduced HGMB1. Associates with chromatin and binds DNA with a preference to non-canonical DNA structures such as single-stranded DNA, DNA-containing cruciforms or bent structures, supercoiled DNA and ZDNA. Can bent DNA and enhance DNA flexibility by looping thus providing a mechanism to promote activities on various gene promoters by enhancing transcription factor binding and/or bringing distant regulatory sequences into close proximity. May be involved in nucleotide excision repair (NER), mismatch repair (MMR) and base excision repair (BER) pathways, and double strand break repair such as non-homologous end joining (NHEJ). Involved in V(D)J recombination by acting as a cofactor of the RAG complex: acts by stimulating cleavage and RAG protein binding at the 23 bp spacer of conserved recombination signal sequences (RSS). In vitro can displace histone H1 from highly bent DNA. Can restructure the canonical nucleosome leading to relaxation of structural constraints for transcription factor-binding. Enhances binding of sterol regulatory element-binding proteins (SREBPs) such as SREBF1 to their cognate DNA sequences and increases their transcriptional activities. Facilitates binding of TP53 to DNA. May be involved in mitochondrial quality control and autophagy in a transcription-dependent fashion implicating HSPB1. Can modulate the activity of the telomerase complex and may be involved in telomere maintenance. Functionally, in the cytoplasm proposed to dissociate the BECN1:BCL2 complex via competitive interaction with BECN1 leading to autophagy activation. Can protect BECN1 and ATG5 from calpain-mediated cleavage and thus proposed to control their proautophagic and proapoptotic functions and to regulate the extent and severity of inflammation-associated cellular injury. In myeloid cells has a protective role against endotoxemia and bacterial infection by promoting autophagy. Involved in endosomal translocation and activation of TLR9 in response to CpG-DNA in macrophages. Its function is as follows. In the extracellular compartment (following either active secretion or passive release) involved in regulation of the inflammatory response. Fully reduced HGMB1 (which subsequently gets oxidized after release) in association with CXCL12 mediates the recruitment of inflammatory cells during the initial phase of tissue injury; the CXCL12:HMGB1 complex triggers CXCR4 homodimerization. Induces the migration of monocyte-derived immature dendritic cells and seems to regulate adhesive and migratory functions of neutrophils implicating AGER/RAGE and ITGAM. Can bind to various types of DNA and RNA including microbial unmethylated CpG-DNA to enhance the innate immune response to nucleic acids. Proposed to act in promiscuous DNA/RNA sensing which cooperates with subsequent discriminative sensing by specific pattern recognition receptors. Promotes extracellular DNA-induced AIM2 inflammasome activation implicating AGER/RAGE. Disulfide HMGB1 binds to transmembrane receptors, such as AGER/RAGE, TLR2, TLR4 and probably TREM1, thus activating their signal transduction pathways. Mediates the release of cytokines/chemokines such as TNF, IL-1, IL-6, IL-8, CCL2, CCL3, CCL4 and CXCL10. Promotes secretion of interferon-gamma by macrophage-stimulated natural killer (NK) cells in concert with other cytokines like IL-2 or IL-12. TLR4 is proposed to be the primary receptor promoting macrophage activation and signaling through TLR4 seems to implicate LY96/MD-2. In bacterial LPS- or LTA-mediated inflammatory responses binds to the endotoxins and transfers them to CD14 for signaling to the respective TLR4:LY96 and TLR2 complexes. Contributes to tumor proliferation by association with ACER/RAGE. Can bind to IL1-beta and signals through the IL1R1:IL1RAP receptor complex. Binding to class A CpG activates cytokine production in plasmacytoid dendritic cells implicating TLR9, MYD88 and AGER/RAGE and can activate autoreactive B cells. Via HMGB1-containing chromatin immune complexes may also promote B cell responses to endogenous TLR9 ligands through a B-cell receptor (BCR)-dependent and ACER/RAGE-independent mechanism. Inhibits phagocytosis of apoptotic cells by macrophages; the function is dependent on poly-ADP-ribosylation and involves binding to phosphatidylserine on the cell surface of apoptotic cells. In adaptive immunity may be involved in enhancing immunity through activation of effector T-cells and suppression of regulatory T (TReg) cells. In contrast, without implicating effector or regulatory T-cells, required for tumor infiltration and activation of T-cells expressing the lymphotoxin LTA:LTB heterotrimer thus promoting tumor malignant progression. Also reported to limit proliferation of T-cells. Released HMGB1:nucleosome complexes formed during apoptosis can signal through TLR2 to induce cytokine production. Involved in induction of immunological tolerance by apoptotic cells; its pro-inflammatory activities when released by apoptotic cells are neutralized by reactive oxygen species (ROS)-dependent oxidation specifically on Cys-106. During macrophage activation by activated lymphocyte-derived self apoptotic DNA (ALD-DNA) promotes recruitment of ALD-DNA to endosomes. The chain is High mobility group protein B1 (HMGB1) from Canis lupus familiaris (Dog).